Here is a 250-residue protein sequence, read N- to C-terminus: Probable S-methyl-5'-thioinosine phosphorylase (250 aa).

Residues Thr-14 and 56-57 (RH) contribute to the phosphate site. A substrate-binding site is contributed by Met-189. Phosphate is bound at residue Thr-190. 213 to 215 (NWA) lines the substrate pocket.

It belongs to the PNP/MTAP phosphorylase family. MTAP subfamily. In terms of assembly, homotrimer.

The catalysed reaction is S-methyl-5'-thioinosine + phosphate = 5-(methylsulfanyl)-alpha-D-ribose 1-phosphate + hypoxanthine. It functions in the pathway purine metabolism; purine nucleoside salvage. Catalyzes the reversible phosphorylation of S-methyl-5'-thioinosine (MTI) to hypoxanthine and 5-methylthioribose-1-phosphate. Involved in the breakdown of S-methyl-5'-thioadenosine (MTA), a major by-product of polyamine biosynthesis. Catabolism of (MTA) occurs via deamination to MTI and phosphorolysis to hypoxanthine. The sequence is that of Probable S-methyl-5'-thioinosine phosphorylase from Xanthomonas campestris pv. campestris (strain ATCC 33913 / DSM 3586 / NCPPB 528 / LMG 568 / P 25).